The primary structure comprises 601 residues: MNEAEHSVEHPPVQGSHVEGGVVEHPDAKDFGSAAALPADPTWFKHAVFYEVLVRAFFDASADGSGDLRGLIDRLDYLQWLGIDCIWLPPFYDSPLRDGGYDIRDFYKVLPEFGTVDDFVALVDAAHRRGIRIITDLVMNHTSESHPWFQESRRDPDGPYGDYYVWSDTSERYTDARIIFVDTEESNWSFDPVRRQFYWHRFFSHQPDLNYDNPAVQEAMIDVIRFWLGLGIDGFRLDAVPYLFEREGTNCENLPETHAFLKRVRKVVDDEFPGRVLLAEANQWPGDVVEYFGDPNTGGDECHMAFHFPLMPRIFMAVRRESRFPISEIIAQTPPIPDMAQWGIFLRNHDELTLEMVTDEERDYMYAEYAKDPRMKANVGIRRRLAPLLDNDRNQIELFTALLLSLPGSPVLYYGDEIGMGDVIWLGDRDGVRIPMQWTPDRNAGFSTANPGRLYLPPSQDPVYGYQAVNVEAQRDTSTSLLNFTRTMLAVRRRHPAFAVGAFQELGGSNPSVLAYVRQVAGDDGDTVLCVNNLSRFPQPIELDLQQWTNYTPVELTGHVEFPRIGQVPYLLTLPGHGFYWFQLTTHEVGAPPTCGGERRL.

The disordered stretch occupies residues 1-21 (MNEAEHSVEHPPVQGSHVEGG). Position 98 (D98) interacts with substrate. N140 serves as a coordination point for Ca(2+). Substrate is bound by residues H141 and Q206. Ca(2+) is bound at residue D208. R236 provides a ligand contact to substrate. The active-site Nucleophile is D238. Ca(2+) contacts are provided by Y242, L243, and E245. The active-site Proton donor is the E280. Substrate is bound by residues H349 and D350.

It belongs to the glycosyl hydrolase 13 family. TreS subfamily. As to quaternary structure, homohexamer.

The enzyme catalyses D-maltose = alpha,alpha-trehalose. The catalysed reaction is Endohydrolysis of (1-&gt;4)-alpha-D-glucosidic linkages in polysaccharides containing three or more (1-&gt;4)-alpha-linked D-glucose units.. It functions in the pathway glycan biosynthesis; glycogen biosynthesis. The protein operates within capsule biogenesis; capsule polysaccharide biosynthesis. Its function is as follows. Catalyzes the reversible interconversion of maltose and trehalose by transglucosylation. Also displays amylase activity, catalyzing the endohydrolysis of (1-&gt;4)-alpha-D-glucosidic linkages in glycogen and maltooligosaccharides such as maltoheptaose, to produce maltose which then can be converted to trehalose. TreS plays a key role in the utilization of trehalose for the production of glycogen and alpha-glucan via the TreS-Pep2 branch involved in the biosynthesis of maltose-1-phosphate (M1P). Might also function as a sensor and/or regulator of trehalose levels within the cell. Thus, when trehalose levels in the cell become dangerously low, TreS could expedite the conversion of glycogen to maltose via its amylase activity and then convert the maltose to trehalose; but this enzyme also could expedite or promote the conversion of trehalose to glycogen when cytoplasmic trehalose levels become too high. In Mycobacterium tuberculosis (strain CDC 1551 / Oshkosh), this protein is Trehalose synthase/amylase TreS.